The primary structure comprises 33 residues: MNAELIVQLGSLALITVAGPAIIVLLFLKQGNL.

A helical membrane pass occupies residues 5 to 25 (LIVQLGSLALITVAGPAIIVL).

This sequence belongs to the Psb30/Ycf12 family. PSII is composed of 1 copy each of membrane proteins PsbA, PsbB, PsbC, PsbD, PsbE, PsbF, PsbH, PsbI, PsbJ, PsbK, PsbL, PsbM, PsbT, PsbY, PsbZ, Psb30/Ycf12, peripheral proteins of the oxygen-evolving complex and a large number of cofactors. It forms dimeric complexes.

Its subcellular location is the plastid. It localises to the chloroplast thylakoid membrane. Functionally, a core subunit of photosystem II (PSII), probably helps stabilize the reaction center. This is Photosystem II reaction center protein Psb30 from Euglena stellata.